Reading from the N-terminus, the 210-residue chain is Cytochrome c biogenesis ATP-binding export protein CcmA (210 aa).

The region spanning 4 to 208 (VPTLSFSKLG…GAIPAQLLEL (205 aa)) is the ABC transporter domain. 39 to 46 (GANGVGKT) contacts ATP.

The protein belongs to the ABC transporter superfamily. CcmA exporter (TC 3.A.1.107) family. In terms of assembly, the complex is composed of two ATP-binding proteins (CcmA) and two transmembrane proteins (CcmB).

It localises to the cell inner membrane. The catalysed reaction is heme b(in) + ATP + H2O = heme b(out) + ADP + phosphate + H(+). Functionally, part of the ABC transporter complex CcmAB involved in the biogenesis of c-type cytochromes; once thought to export heme, this seems not to be the case, but its exact role is uncertain. Responsible for energy coupling to the transport system. The protein is Cytochrome c biogenesis ATP-binding export protein CcmA of Albidiferax ferrireducens (strain ATCC BAA-621 / DSM 15236 / T118) (Rhodoferax ferrireducens).